The following is a 342-amino-acid chain: Ferredoxin--NADP reductase (342 aa).

Positions 17, 36, 44, 49, 89, 124, 289, and 330 each coordinate FAD.

This sequence belongs to the ferredoxin--NADP reductase type 2 family. Homodimer. It depends on FAD as a cofactor.

The catalysed reaction is 2 reduced [2Fe-2S]-[ferredoxin] + NADP(+) + H(+) = 2 oxidized [2Fe-2S]-[ferredoxin] + NADPH. This is Ferredoxin--NADP reductase from Bradyrhizobium sp. (strain BTAi1 / ATCC BAA-1182).